Reading from the N-terminus, the 340-residue chain is MRAPGHAAIRWLFWMPLVCSVAMEQLQRDPTLDYHWDLWKKTHEKEYKDKNEEEVRRLIWEKNLKFIMIHNLEYSMGMHTYQVGMNDMGDMTNEEILCRMGALRIPRQSPKTVTFRSYSNRTLPDTVDWREKGCVTEVKYQGSCGACWAFSAVGALEGQLKLKTGKLISLSAQNLVDCSNEEKYGNKGCGGGYMTEAFQYIIDNGGIEADASYPYKATDEKCHYNSKNRAATCSRYIQLPFGDEDALKEAVATKGPVSVGIDASHSSFFFYKSGVYDDPSCTGNVNHGVLVVGYGTLDGKDYWLVKNSWGLNFGDQGYIRMARNNKNHCGIASYCSYPEI.

A signal peptide spans 1 to 17; that stretch reads MRAPGHAAIRWLFWMPL. Residues 18–122 constitute a propeptide, activation peptide; that stretch reads VCSVAMEQLQ…VTFRSYSNRT (105 aa). N-linked (GlcNAc...) asparagine glycosylation occurs at N120. 4 cysteine pairs are disulfide-bonded: C134–C233, C144–C189, C178–C222, and C281–C329. Residue C147 is part of the active site. Residues H287 and N307 contribute to the active site.

This sequence belongs to the peptidase C1 family. In terms of tissue distribution, widely expressed with highest expression found in non-skeletal tissues. Relatively high levels found in skeletal tissues. Expressed in spleen, B cells, dendritic cells and macrophages.

Its subcellular location is the lysosome. It is found in the secreted. The protein localises to the cytoplasmic vesicle. It localises to the phagosome. The catalysed reaction is Similar to cathepsin L, but with much less activity on Z-Phe-Arg-|-NHMec, and more activity on the Z-Val-Val-Arg-|-Xaa compound.. Functionally, thiol protease. Key protease responsible for the removal of the invariant chain from MHC class II molecules and MHC class II antigen presentation. The bond-specificity of this proteinase is in part similar to the specificities of cathepsin L. The protein is Cathepsin S (Ctss) of Mus musculus (Mouse).